Consider the following 66-residue polypeptide: Phylloseptin-H7 (66 aa).

Positions 1–22 (MAFLKKSLFLVLFLGLVSLSIC) are cleaved as a signal peptide. A propeptide spanning residues 23–44 (EEEKRETEEEENDQEEDDKSEE) is cleaved from the precursor. Residues 25 to 44 (EKRETEEEENDQEEDDKSEE) are disordered. A compositionally biased stretch (acidic residues) spans 30 to 41 (EEEENDQEEDDK). L65 is subject to Leucine amide.

Expressed by the skin glands.

It localises to the secreted. In terms of biological role, has antimicrobial activity. The protein is Phylloseptin-H7 of Pithecopus hypochondrialis (Orange-legged leaf frog).